The chain runs to 154 residues: Myoglobin (154 aa).

In terms of domain architecture, Globin spans G2–K148. A Phosphoserine modification is found at S4. H65 serves as a coordination point for nitrite. Residue H65 participates in O2 binding. The residue at position 68 (T68) is a Phosphothreonine. H94 contributes to the heme b binding site.

Belongs to the globin family. Monomeric.

Its subcellular location is the cytoplasm. The protein localises to the sarcoplasm. The enzyme catalyses Fe(III)-heme b-[protein] + nitric oxide + H2O = Fe(II)-heme b-[protein] + nitrite + 2 H(+). The catalysed reaction is H2O2 + AH2 = A + 2 H2O. Functionally, monomeric heme protein which primary function is to store oxygen and facilitate its diffusion within muscle tissues. Reversibly binds oxygen through a pentacoordinated heme iron and enables its timely and efficient release as needed during periods of heightened demand. Depending on the oxidative conditions of tissues and cells, and in addition to its ability to bind oxygen, it also has a nitrite reductase activity whereby it regulates the production of bioactive nitric oxide. Under stress conditions, like hypoxia and anoxia, it also protects cells against reactive oxygen species thanks to its pseudoperoxidase activity. This chain is Myoglobin (MB), found in Ziphius cavirostris (Cuvier's beaked whale).